A 538-amino-acid chain; its full sequence is MPKILKFNEEARRALERGVDKVANAVKVTLGPKGRNVVIEKSWGSPTITNDGVSIAKEIELEDKFENLGAQLVKEVASKTNDVAGDGTTTATVLAQAMIKEGLKNVAAGANPILLKRGIDKAVEKAVEEIKKVSKKLSGREDIAHVAAISANSAEIGELIAEAMDKVGEDGVITVEDSKTLETYVEFTEGMQFDRGYISPYFVTDAEKMEVVLKEPFILITDRKLSAVKPLIPILEKVAQTGKPLLVIAEDVEGEVLTTLVLNKLKGTLQSCAVKAPGFGERRKAMLQDIAILTGGQVASEELGINLEDLTLEDLGRADLVRVKKDETIIIGGKGDPEAIKKRIAQIKAQIEETTSEYEKETLQERMAKLAGGVAVIKVGAATETELKEKKHRIEDALSATRAAVEEGIVPGGGVTLLRARKAVEKVIEELEGDEKIGAQIVYKALSAPIKQIAENAGYDGAVIIEKILSNDDPAYGFDALRGEYCNMFERGIIDPAKVTRSALQNAASIAGMLLTTEVLIVEKPEEKKETPSMPEEF.

Residues 29-32 (TLGP), 86-90 (DGTTT), Gly413, 479-481 (DAL), and Asp495 contribute to the ATP site.

It belongs to the chaperonin (HSP60) family. Forms a cylinder of 14 subunits composed of two heptameric rings stacked back-to-back. Interacts with the co-chaperonin GroES.

The protein localises to the cytoplasm. It catalyses the reaction ATP + H2O + a folded polypeptide = ADP + phosphate + an unfolded polypeptide.. In terms of biological role, together with its co-chaperonin GroES, plays an essential role in assisting protein folding. The GroEL-GroES system forms a nano-cage that allows encapsulation of the non-native substrate proteins and provides a physical environment optimized to promote and accelerate protein folding. This chain is Chaperonin GroEL, found in Thermotoga maritima (strain ATCC 43589 / DSM 3109 / JCM 10099 / NBRC 100826 / MSB8).